The primary structure comprises 110 residues: Period circadian protein (110 aa).

Residues valine 23–threonine 97 form a disordered region. Repeat copies occupy residues glycine 30–threonine 31, glycine 33–threonine 34, glycine 36–threonine 37, glycine 38–threonine 39, glycine 40–threonine 41, glycine 42–threonine 43, glycine 44–threonine 45, glycine 46–threonine 47, glycine 48–threonine 49, glycine 50–threonine 51, glycine 52–threonine 53, and glycine 54–threonine 55. The segment covering glycine 30–threonine 63 has biased composition (gly residues). The segment at glycine 30–threonine 79 is 24 X 2 AA approximate tandem repeats of G-T. One copy of the 13; approximate repeat lies at aspartate 56–threonine 57. A run of 3 repeats spans residues glycine 58–threonine 59, glycine 60–threonine 61, and glycine 62–threonine 63. Residues arginine 64–asparagine 65 form a 17; approximate repeat. Residues arginine 64 to tyrosine 83 show a composition bias toward low complexity. The stretch at glycine 66–threonine 67 is repeat 18. The 19; approximate repeat unit spans residues asparagine 68–serine 69. Repeat unit 20 spans residues glycine 70–threonine 71. Residues asparagine 72–serine 73 form a 21; approximate repeat. Residues glycine 74 to threonine 75 form repeat 22. The 23; approximate repeat unit spans residues arginine 76–threonine 77. Repeat 24 spans residues glycine 78 to threonine 79. The span at arginine 84 to valine 96 shows a compositional bias: gly residues.

As to quaternary structure, forms a heterodimer with timeless (TIM); the complex then translocates into the nucleus. Phosphorylated with a circadian rhythmicity, probably by the double-time protein (dbt). Phosphorylation could be implicated in the stability of per monomer and in the formation of heterodimer per-tim.

The protein localises to the nucleus. Its subcellular location is the cytoplasm. It localises to the perinuclear region. Its function is as follows. Essential for biological clock functions. Determines the period length of circadian and ultradian rhythms; an increase in PER dosage leads to shortened circadian rhythms and a decrease leads to lengthened circadian rhythms. Essential for the circadian rhythmicity of locomotor activity, eclosion behavior, and for the rhythmic component of the male courtship song that originates in the thoracic nervous system. The biological cycle depends on the rhythmic formation and nuclear localization of the TIM-PER complex. Light induces the degradation of TIM, which promotes elimination of PER. Nuclear activity of the heterodimer coordinatively regulates PER and TIM transcription through a negative feedback loop. Behaves as a negative element in circadian transcriptional loop. Does not appear to bind DNA, suggesting indirect transcriptional inhibition. The chain is Period circadian protein (per) from Drosophila erecta (Fruit fly).